The primary structure comprises 310 residues: Protoheme IX farnesyltransferase 2 (310 aa).

9 helical membrane-spanning segments follow: residues 25-45, 49-69, 98-118, 121-141, 145-165, 176-196, 222-242, 245-265, and 277-297; these read PGII…AAKG, LVLM…GCAI, HVLL…ALFT, LALL…SLYM, SVYG…VGYC, VILL…IAIF, IVLY…AGYT, AFMA…LKGY, and QVFG…ALDF.

Belongs to the UbiA prenyltransferase family. Protoheme IX farnesyltransferase subfamily.

It localises to the cell inner membrane. The catalysed reaction is heme b + (2E,6E)-farnesyl diphosphate + H2O = Fe(II)-heme o + diphosphate. Its pathway is porphyrin-containing compound metabolism; heme O biosynthesis; heme O from protoheme: step 1/1. Functionally, converts heme B (protoheme IX) to heme O by substitution of the vinyl group on carbon 2 of heme B porphyrin ring with a hydroxyethyl farnesyl side group. This chain is Protoheme IX farnesyltransferase 2, found in Shewanella sp. (strain MR-7).